A 532-amino-acid polypeptide reads, in one-letter code: Probable inorganic phosphate transporter 1-9 (532 aa).

At 1 to 22 (MPELSLLSALDAARIQWYHFKA) the chain is on the cytoplasmic side. A helical transmembrane segment spans residues 23–43 (IIVAGMGLFTDAYDLFCIAPI). The Extracellular portion of the chain corresponds to 44–62 (MKMISQIYYHKDSIGTALL). The chain crosses the membrane as a helical span at residues 63–83 (STSYAIALLGTALGQLIFGYL). Residues 84–91 (GDRVGRRK) are Cytoplasmic-facing. Residues 92–112 (VYGLSLLIMVFSSFGCGFSVC) traverse the membrane as a helical segment. Residues 113–124 (TTRRSCVMVSLG) are Extracellular-facing. Residues 125-145 (FFRFVLGLGIGGDYPLSATIM) traverse the membrane as a helical segment. Topologically, residues 146–154 (SEFANKRTR) are cytoplasmic. The chain crosses the membrane as a helical span at residues 155 to 175 (GAFIAAVFSMQGLGILMSSAV). Residues 176–207 (TMVVCLAFKNAGEGSSEKTNVAGLETLAPPES) are Extracellular-facing. Residues 208 to 228 (DIAWRLILMIGALPAALTFYW) form a helical membrane-spanning segment. At 229 to 292 (RMLMPETARY…KLFSRRFLSL (64 aa)) the chain is on the cytoplasmic side. Residues 293–313 (HGRDLFAASANWFLVDVVFYT) form a helical membrane-spanning segment. The Extracellular portion of the chain corresponds to 314-343 (SNLLLSQIFNFSNKPLNSTNVYDSAFEVAK). The helical transmembrane segment at 344 to 364 (LAAIVAACSTIPGYWFTVYFI) threads the bilayer. Residues 365-371 (DKIGRVK) lie on the Cytoplasmic side of the membrane. The chain crosses the membrane as a helical span at residues 372-392 (IQMMGFFLMAVVYLVAGIPYS). Residues 393–406 (WYWSKHEKTNKGFM) are Extracellular-facing. A helical membrane pass occupies residues 407 to 427 (VLYGLIFFFSNFGPNTTTFII). Residues 428–441 (PAELFPARFRSTCH) are Cytoplasmic-facing. Residues 442–462 (GISGAAGKFGAIVGTVGFLWA) form a helical membrane-spanning segment. Residues 463-478 (TRHHEEDGFPDVKRVR) lie on the Extracellular side of the membrane. The chain crosses the membrane as a helical span at residues 479 to 499 (IAFLILGGVCIAGMIVTYLFT). The Cytoplasmic segment spans residues 500–532 (RETMGRSLEENEDEIVSTSAGSSPANELLRRQY). The tract at residues 509-532 (ENEDEIVSTSAGSSPANELLRRQY) is disordered. Residues 515-524 (VSTSAGSSPA) are compositionally biased toward polar residues.

Belongs to the major facilitator superfamily. Phosphate:H(+) symporter (TC 2.A.1.9) family.

The protein localises to the membrane. In terms of biological role, high-affinity transporter for external inorganic phosphate. The chain is Probable inorganic phosphate transporter 1-9 (PHT1-9) from Arabidopsis thaliana (Mouse-ear cress).